A 147-amino-acid polypeptide reads, in one-letter code: DNA-directed RNA polymerase I subunit rpa14 (147 aa).

The segment at 71-147 (VQGPPTEELI…TQGVGEKEQS (77 aa)) is disordered. Low complexity predominate over residues 74–84 (PPTEELIIPPE). Basic and acidic residues predominate over residues 87–111 (LETKEEESLKHAREENDDLHLDKET). Residues 112–124 (KKRLKKEKKKAAR) are compositionally biased toward basic residues. The span at 125–135 (REKEEARKAKA) shows a compositional bias: basic and acidic residues.

Component of the RNA polymerase I (Pol I) complex consisting of 14 subunits. Part of a Pol I subcomplex consisting of the subunits A14 and A43. Interacts with rpa43. Phosphorylated.

It is found in the nucleus. Its subcellular location is the nucleolus. DNA-dependent RNA polymerase catalyzes the transcription of DNA into RNA using the four ribonucleoside triphosphates as substrates. Component of RNA polymerase I which synthesizes ribosomal RNA precursors. A14 seems to play a role in the stability of Pol I subunit A43 and association of rrn3 to Pol I. The polypeptide is DNA-directed RNA polymerase I subunit rpa14 (ker1) (Schizosaccharomyces pombe (strain 972 / ATCC 24843) (Fission yeast)).